Consider the following 158-residue polypeptide: SsrA-binding protein (158 aa).

Basic and acidic residues predominate over residues 133-148 (KAQDKRETSAKRDWNR). The interval 133-158 (KAQDKRETSAKRDWNRQKARLLKQNG) is disordered. Over residues 149 to 158 (QKARLLKQNG) the composition is skewed to basic residues.

This sequence belongs to the SmpB family.

It is found in the cytoplasm. In terms of biological role, required for rescue of stalled ribosomes mediated by trans-translation. Binds to transfer-messenger RNA (tmRNA), required for stable association of tmRNA with ribosomes. tmRNA and SmpB together mimic tRNA shape, replacing the anticodon stem-loop with SmpB. tmRNA is encoded by the ssrA gene; the 2 termini fold to resemble tRNA(Ala) and it encodes a 'tag peptide', a short internal open reading frame. During trans-translation Ala-aminoacylated tmRNA acts like a tRNA, entering the A-site of stalled ribosomes, displacing the stalled mRNA. The ribosome then switches to translate the ORF on the tmRNA; the nascent peptide is terminated with the 'tag peptide' encoded by the tmRNA and targeted for degradation. The ribosome is freed to recommence translation, which seems to be the essential function of trans-translation. This chain is SsrA-binding protein, found in Jannaschia sp. (strain CCS1).